We begin with the raw amino-acid sequence, 159 residues long: Large ribosomal subunit protein bL35c (159 aa).

A chloroplast-targeting transit peptide spans 1 to 86 (MAMASATATL…TSSPSFTVFA (86 aa)).

As to quaternary structure, component of the chloroplast large ribosomal subunit (LSU). Mature 70S chloroplast ribosomes of higher plants consist of a small (30S) and a large (50S) subunit. The 30S small subunit contains 1 molecule of ribosomal RNA (16S rRNA) and 24 different proteins. The 50S large subunit contains 3 rRNA molecules (23S, 5S and 4.5S rRNA) and 33 different proteins.

Its subcellular location is the plastid. It is found in the chloroplast. Component of the chloroplast ribosome (chloro-ribosome), a dedicated translation machinery responsible for the synthesis of chloroplast genome-encoded proteins, including proteins of the transcription and translation machinery and components of the photosynthetic apparatus. This is Large ribosomal subunit protein bL35c (RPL35) from Spinacia oleracea (Spinach).